We begin with the raw amino-acid sequence, 97 residues long: Essential MCU regulator, mitochondrial (97 aa).

The transit peptide at 1–37 directs the protein to the mitochondrion; that stretch reads MAARMGVLSVAGFRAAARAGGLLARPKQSTAVVPCRT. Topologically, residues 38–55 are mitochondrial matrix; it reads VIASSAGAILPKPEKVSF. Residues 56 to 75 form a helical membrane-spanning segment; sequence GLLRVFTVVIPFLYIGTLIS. Over 76-97 the chain is Mitochondrial intermembrane; the sequence is KNFAAVLEEHDIFVPEDDDDDD.

It belongs to the SMDT1/EMRE family. In terms of assembly, component of the uniplex complex.

The protein localises to the mitochondrion inner membrane. In terms of biological role, essential regulatory subunit of the mitochondrial calcium uniporter complex (uniplex), a complex that mediates calcium uptake into mitochondria. Required to bridge the calcium-sensing proteins micu1 with the calcium-conducting subunit mcu. Acts by mediating activation of mcu and retention of micu1 to the mcu pore, in order to ensure tight regulation of the uniplex complex and appropriate responses to intracellular calcium signaling. The chain is Essential MCU regulator, mitochondrial from Xenopus laevis (African clawed frog).